Here is a 563-residue protein sequence, read N- to C-terminus: Delta-1-pyrroline-5-carboxylate dehydrogenase, mitochondrial (563 aa).

A mitochondrion-targeting transit peptide spans 1–23 (MLPPALLRRSLLSYAWRGSGLRW). The residue at position 30 (K30) is an N6-succinyllysine. S43 carries the phosphoserine modification. K51 carries the N6-acetyllysine modification. N6-acetyllysine; alternate is present on residues K92, K98, K113, K129, and K174. Residues K92, K98, K113, K129, and K174 each carry the N6-succinyllysine; alternate modification. Residues S207, K232, and 285-289 (GSVPT) each bind NAD(+). Residue E313 is the Proton acceptor of the active site. N6-acetyllysine is present on K317. The residue at position 346 (K346) is an N6-succinyllysine. The active-site Nucleophile is C347. K364 and K375 each carry N6-acetyllysine. N6-succinyllysine is present on K394. E446 is an NAD(+) binding site. K461 is modified (N6-acetyllysine). Position 508 is an N6-acetyllysine; alternate (K508). K508 is modified (N6-succinyllysine; alternate). S512 is a substrate binding site.

It belongs to the aldehyde dehydrogenase family. As to quaternary structure, homodimer.

The protein localises to the mitochondrion matrix. The enzyme catalyses L-glutamate 5-semialdehyde + NAD(+) + H2O = L-glutamate + NADH + 2 H(+). It participates in amino-acid degradation; L-proline degradation into L-glutamate; L-glutamate from L-proline: step 2/2. In terms of biological role, irreversible conversion of delta-1-pyrroline-5-carboxylate (P5C), derived either from proline or ornithine, to glutamate. This is a necessary step in the pathway interconnecting the urea and tricarboxylic acid cycles. The preferred substrate is glutamic gamma-semialdehyde, other substrates include succinic, glutaric and adipic semialdehydes. This is Delta-1-pyrroline-5-carboxylate dehydrogenase, mitochondrial (Aldh4a1) from Rattus norvegicus (Rat).